A 385-amino-acid chain; its full sequence is uncharacterized protein (385 aa).

9 helical membrane-spanning segments follow: residues 12 to 32 (GVAILGILLLNISAFGLPKAA), 50 to 70 (WAFLDLIGQVKFLTLFALLFG), 90 to 110 (LLVLLGFIHGLLFWDGDILLA), 132 to 152 (FNTGVMLYLVGLGVLLLLGLI), 195 to 215 (LALGAQYGWQLAGMMLIGAAL), 233 to 253 (TGFVLVAIGVTINLPAIALQW), 272 to 292 (LSAPFQAIGYASLFYGFWPQL), 312 to 332 (YLLQTLICTTLFYHLGLFMHF), and 335 to 355 (LELLAFVIPVWLANILFSVIW).

It to B.subtilis YxaH and YrkO.

It localises to the cell membrane. Its function is as follows. Involved in transport. This is an uncharacterized protein from Escherichia coli (strain K12).